Here is a 238-residue protein sequence, read N- to C-terminus: Ribosomal RNA small subunit methyltransferase G (238 aa).

S-adenosyl-L-methionine-binding positions include Gly78, Phe83, 129-130 (AE), and Arg148. A disordered region spans residues 217 to 238 (KKKETPKKYPRKAGTPAKSPIK).

Belongs to the methyltransferase superfamily. RNA methyltransferase RsmG family.

It is found in the cytoplasm. In terms of biological role, specifically methylates the N7 position of a guanine in 16S rRNA. This is Ribosomal RNA small subunit methyltransferase G from Lactococcus lactis subsp. cremoris (strain SK11).